A 187-amino-acid polypeptide reads, in one-letter code: Elongation factor P (187 aa).

N6-(3,6-diaminohexanoyl)-5-hydroxylysine is present on Lys34.

Belongs to the elongation factor P family. Post-translationally, may be beta-lysylated on the epsilon-amino group of Lys-34 by the combined action of EpmA and EpmB, and then hydroxylated on the C5 position of the same residue by EpmC (if this protein is present). Lysylation is critical for the stimulatory effect of EF-P on peptide-bond formation. The lysylation moiety may extend toward the peptidyltransferase center and stabilize the terminal 3-CCA end of the tRNA. Hydroxylation of the C5 position on Lys-34 may allow additional potential stabilizing hydrogen-bond interactions with the P-tRNA.

Its subcellular location is the cytoplasm. Its pathway is protein biosynthesis; polypeptide chain elongation. Its function is as follows. Involved in peptide bond synthesis. Alleviates ribosome stalling that occurs when 3 or more consecutive Pro residues or the sequence PPG is present in a protein, possibly by augmenting the peptidyl transferase activity of the ribosome. Modification of Lys-34 is required for alleviation. The polypeptide is Elongation factor P (Buchnera aphidicola subsp. Schizaphis graminum (strain Sg)).